A 266-amino-acid polypeptide reads, in one-letter code: Trypsin Blo t 3 (266 aa).

A signal peptide spans 1–15; it reads MKVLVLFCLVSLAAA. Positions 16 to 35 are excised as a propeptide; the sequence is GPLKDALNKAQVDAFYAEGY. The Peptidase S1 domain maps to 36-260; that stretch reads IVDGSNAADG…RVGNYISWIK (225 aa). Residues C60 and C76 are joined by a disulfide bond. Catalysis depends on charge relay system residues H75 and D120. 2 disulfide bridges follow: C187-C204 and C216-C240. Residue S220 is the Charge relay system of the active site.

The protein belongs to the peptidase S1 family.

It is found in the secreted. It carries out the reaction Preferential cleavage: Arg-|-Xaa, Lys-|-Xaa.. This chain is Trypsin Blo t 3, found in Blomia tropicalis (Mite).